The primary structure comprises 822 residues: Anaphase-promoting complex subunit 2 (822 aa).

A phosphoserine mark is found at S218, S314, S470, S534, and S697. Residues G450–K495 form a disordered region. Over residues Q468–V481 the composition is skewed to acidic residues. Residues I502–L700 are cullin homology. Y810 is modified (phosphotyrosine).

The protein belongs to the cullin family. The mammalian APC/C is composed at least of 14 distinct subunits ANAPC1, ANAPC2, CDC27/APC3, ANAPC4, ANAPC5, CDC16/APC6, ANAPC7, CDC23/APC8, ANAPC10, ANAPC11, CDC26/APC12, ANAPC13, ANAPC15 and ANAPC16 that assemble into a complex of at least 19 chains with a combined molecular mass of around 1.2 MDa; APC/C interacts with FZR1 and FBXO5. In the context of the APC/C complex, directly interacts with UBE2C and UBE2S. Interacts (via cullin domain) with ANAPC11 and with UBCH10. Interacts with NEUROD2. Interacts with FBXO43; the interaction is direct.

It participates in protein modification; protein ubiquitination. In terms of biological role, together with the RING-H2 protein ANAPC11, constitutes the catalytic component of the anaphase promoting complex/cyclosome (APC/C), a cell cycle-regulated E3 ubiquitin ligase that controls progression through mitosis and the G1 phase of the cell cycle. The APC/C complex acts by mediating ubiquitination and subsequent degradation of target proteins: it mainly mediates the formation of 'Lys-11'-linked polyubiquitin chains and, to a lower extent, the formation of 'Lys-48'- and 'Lys-63'-linked polyubiquitin chains. The APC/C complex catalyzes assembly of branched 'Lys-11'-/'Lys-48'-linked branched ubiquitin chains on target proteins. The CDC20-APC/C complex positively regulates the formation of synaptic vesicle clustering at active zone to the presynaptic membrane in postmitotic neurons. CDC20-APC/C-induced degradation of NEUROD2 drives presynaptic differentiation. This Homo sapiens (Human) protein is Anaphase-promoting complex subunit 2 (ANAPC2).